Consider the following 483-residue polypeptide: BTB/POZ domain and ankyrin repeat-containing protein COCH (483 aa).

The BTB domain occupies 25 to 105 (SDVVFSVEGR…LYSGQVSIVP (81 aa)). Residues 111 to 125 (RPNCGDRGCWHTHCT) form a C2HC NPR-type zinc finger. Positions 114, 119, 121, and 124 each coordinate Zn(2+). 4 ANK repeats span residues 249–278 (QKIR…LNLD), 279–308 (EALA…DVNF), 313–342 (TGKT…DPNV), and 346–380 (DGVT…KLRL). Disordered regions lie at residues 395 to 435 (EEGN…NSNM) and 450 to 483 (MSTS…SHDY). Residues 398–414 (NNNNNANNNNTGSSATN) are compositionally biased toward low complexity. Residues 456 to 465 (DSGDDDHNSN) show a composition bias toward basic and acidic residues.

Belongs to the plant 'ANKYRIN-BTB/POZ' family. 'NOOT-BOP-COCH-like' (NBCL) subfamily. In terms of assembly, homodimer.

It is found in the nucleus. It localises to the cytoplasm. The protein resides in the cell membrane. It functions in the pathway protein modification; protein ubiquitination. Functionally, may act as a substrate-specific adapter of an E3 ubiquitin-protein ligase complex (CUL3-RBX1-BTB) which mediates the ubiquitination and subsequent proteasomal degradation of target proteins. Transcriptional co-regulator involved in the promotion of leaf and floral meristem fate and determinacy. Promotes normal stipule growth and development. Required for the abscission of senescent organs, probably by regulating the cell wall disorganization in abscission zones (AZs, e.g. pulvini at the base of leaves). Down-regulates UNI expression in primordia of leaves and secondary inflorescences, and thereby controls their sizes and/or structures. Involved in the coordination of the symbiotic nodule developmental program. Promotes the formation of root nodules by interacting directly with APP1 to modulate the expression of the nuclear transcription factor Y subunit (NF-YA1), a key nodulin. Necessary for the robust maintenance of nodule identity throughout the nodule developmental program. This Pisum sativum (Garden pea) protein is BTB/POZ domain and ankyrin repeat-containing protein COCH.